The following is a 904-amino-acid chain: Pentatricopeptide repeat-containing protein At4g30825, chloroplastic (904 aa).

Residues M1–R61 constitute a chloroplast transit peptide. Residues N75 to Q94 are disordered. PPR repeat units follow at residues N173–F203, S209–P243, N244–F274, C278–L312, K313–P347, N348–P382, D383–P417, N418–Y452, N487–F521, E522–D553, N557–L591, D592–Q622, D628–W662, N663–P697, N698–D732, V733–V766, S767–P801, D802–P836, D837–P871, and D872–I904.

The protein belongs to the PPR family. P subfamily.

Its subcellular location is the plastid. The protein resides in the chloroplast. This Arabidopsis thaliana (Mouse-ear cress) protein is Pentatricopeptide repeat-containing protein At4g30825, chloroplastic.